The sequence spans 150 residues: Probable NADH dehydrogenase [ubiquinone] 1 alpha subcomplex subunit 5 (150 aa).

It belongs to the complex I NDUFA5 subunit family. In terms of assembly, complex I is composed of 45 different subunits.

It localises to the mitochondrion inner membrane. Its function is as follows. Accessory subunit of the mitochondrial membrane respiratory chain NADH dehydrogenase (Complex I), that is believed not to be involved in catalysis. Complex I functions in the transfer of electrons from NADH to the respiratory chain. The immediate electron acceptor for the enzyme is believed to be ubiquinone. The sequence is that of Probable NADH dehydrogenase [ubiquinone] 1 alpha subcomplex subunit 5 from Caenorhabditis elegans.